The following is a 323-amino-acid chain: Sphingolipid delta(4)-desaturase DES1 (323 aa).

Helical transmembrane passes span 41-61 (YNLI…FYLV) and 68-88 (WVVF…TLAI). Positions 89–93 (HEISH) match the Histidine box-1 motif. The helical transmembrane segment at 102-122 (AMWNRWFGIFANLPLGLPYSI) threads the bilayer. The short motif at 128–132 (HMDHH) is the Histidine box-2 element. 3 helical membrane-spanning segments follow: residues 159 to 179 (KFIW…CINP), 185 to 205 (LEII…YLWG), and 209 to 229 (IFYM…SGHF). Positions 259-263 (HNEHH) match the Histidine box-3 motif.

This sequence belongs to the fatty acid desaturase type 1 family. DEGS subfamily. In terms of assembly, interacts with RLBP1; the interaction increases synthesis of chromophore-precursors by DEGS1. As to expression, expressed in retina and retinal pigment epithelium by Mueller cells (at protein level).

The protein localises to the endoplasmic reticulum membrane. The enzyme catalyses an N-acylsphinganine + 2 Fe(II)-[cytochrome b5] + O2 + 2 H(+) = an N-acylsphing-4-enine + 2 Fe(III)-[cytochrome b5] + 2 H2O. The catalysed reaction is all-trans-retinol = 11-cis-retinol. It catalyses the reaction all-trans-retinol = 9-cis-retinol. It carries out the reaction all-trans-retinol = 13-cis-retinol. The enzyme catalyses 11-cis-retinol = 13-cis-retinol. The catalysed reaction is 11-cis-retinol = 9-cis-retinol. Its function is as follows. Has sphingolipid-delta-4-desaturase activity. Converts D-erythro-sphinganine to D-erythro-sphingosine (E-sphing-4-enine). Catalyzes the equilibrium isomerization of retinols. This is Sphingolipid delta(4)-desaturase DES1 (DEGS1) from Gallus gallus (Chicken).